A 514-amino-acid polypeptide reads, in one-letter code: 2,3-bisphosphoglycerate-independent phosphoglycerate mutase (514 aa).

2 residues coordinate Mn(2+): Asp-14 and Ser-64. Ser-64 serves as the catalytic Phosphoserine intermediate. Substrate-binding positions include His-125, 155 to 156 (RD), Arg-187, Arg-193, 263 to 266 (RADR), and Lys-336. 5 residues coordinate Mn(2+): Asp-403, His-407, Asp-444, His-445, and His-463.

It belongs to the BPG-independent phosphoglycerate mutase family. As to quaternary structure, monomer. Mn(2+) is required as a cofactor.

The catalysed reaction is (2R)-2-phosphoglycerate = (2R)-3-phosphoglycerate. It participates in carbohydrate degradation; glycolysis; pyruvate from D-glyceraldehyde 3-phosphate: step 3/5. Catalyzes the interconversion of 2-phosphoglycerate and 3-phosphoglycerate. This Salmonella choleraesuis (strain SC-B67) protein is 2,3-bisphosphoglycerate-independent phosphoglycerate mutase.